We begin with the raw amino-acid sequence, 96 residues long: Xylulose kinase (96 aa).

71–72 provides a ligand contact to substrate; sequence QH.

Belongs to the FGGY kinase family.

The enzyme catalyses D-xylulose + ATP = D-xylulose 5-phosphate + ADP + H(+). Functionally, catalyzes the phosphorylation of D-xylulose to D-xylulose 5-phosphate. This is Xylulose kinase from Arthrobacter sp. (strain NRRL B3728).